A 571-amino-acid chain; its full sequence is uncharacterized protein (571 aa).

The tract at residues 1 to 25 (MAPSVATSLKAEILPSPRTSSPSSN) is disordered. The region spanning 135 to 389 (FSVFPAPILD…RGLHKNAFAT (255 aa)) is the FAD-binding FR-type domain. The tract at residues 447–479 (NPLQKSSDDDASSTVSQQTETEMDSFEVKKDGT) is disordered.

Belongs to the flavoprotein pyridine nucleotide cytochrome reductase family. FAD is required as a cofactor.

This is an uncharacterized protein from Schizosaccharomyces pombe (strain 972 / ATCC 24843) (Fission yeast).